Reading from the N-terminus, the 1242-residue chain is Receptor-type adenylate cyclase GRESAG 4.1 (1242 aa).

At 1–39 (MHWQEGGGRGCVYTHGNCRRNLTARALQALQHVEALTCH) the chain is on the cytoplasmic side. A helical membrane pass occupies residues 40-60 (YCVSLLHLLPLLLMWMPPVCA). At 61–862 (DDSAVTVNVL…THTVTDSWNN (802 aa)) the chain is on the extracellular side. N-linked (GlcNAc...) asparagine glycans are attached at residues Asn-116, Asn-289, Asn-318, Asn-338, Asn-401, Asn-534, Asn-563, Asn-603, Asn-702, Asn-741, and Asn-818. A helical membrane pass occupies residues 863 to 883 (FWVCIRLVIIYCPWCVPTHLP). Residues 884-1242 (AERRNNNRAP…PFYDMHLQEY (359 aa)) are Cytoplasmic-facing. The 156-residue stretch at 901–1056 (TLIFTDIESS…RTPNMAARTE (156 aa)) folds into the Guanylate cyclase domain. The Mg(2+) site is built by Asp-906 and Asp-949.

The protein belongs to the adenylyl cyclase class-3 family. The cofactor is Mg(2+).

It is found in the membrane. It carries out the reaction ATP = 3',5'-cyclic AMP + diphosphate. Functionally, could act as a receptor for an unknown ligand. The polypeptide is Receptor-type adenylate cyclase GRESAG 4.1 (GRESAG 4.1) (Trypanosoma brucei brucei).